A 239-amino-acid polypeptide reads, in one-letter code: Large ribosomal subunit protein uL3 (239 aa).

Disordered regions lie at residues 140–166 (SHRS…PGHM) and 211–239 (PLPK…QEGA). Glutamine 151 carries the N5-methylglutamine modification.

Belongs to the universal ribosomal protein uL3 family. As to quaternary structure, part of the 50S ribosomal subunit. Forms a cluster with proteins L14 and L19. Post-translationally, methylated by PrmB.

One of the primary rRNA binding proteins, it binds directly near the 3'-end of the 23S rRNA, where it nucleates assembly of the 50S subunit. This Bradyrhizobium sp. (strain BTAi1 / ATCC BAA-1182) protein is Large ribosomal subunit protein uL3.